We begin with the raw amino-acid sequence, 105 residues long: Large ribosomal subunit protein uL23 (105 aa).

The protein belongs to the universal ribosomal protein uL23 family. In terms of assembly, part of the 50S ribosomal subunit. Contacts protein L29, and trigger factor when it is bound to the ribosome.

Functionally, one of the early assembly proteins it binds 23S rRNA. One of the proteins that surrounds the polypeptide exit tunnel on the outside of the ribosome. Forms the main docking site for trigger factor binding to the ribosome. The chain is Large ribosomal subunit protein uL23 from Herminiimonas arsenicoxydans.